Consider the following 1985-residue polypeptide: Non-reducing polyketide synthase ntnG (1985 aa).

Positions 7–243 are N-terminal acylcarrier protein transacylase (SAT) domain; sequence LLFGDQADAP…TILPAFGAVH (237 aa). The region spanning 364-792 is the Ketosynthase family 3 (KS3) domain; the sequence is SGSVAIIGMS…GGNSCFVLEE (429 aa). Active-site for beta-ketoacyl synthase activity residues include Cys-536, His-671, and His-711. The segment at 889 to 1148 is malonyl-CoA:ACP transacylase (MAT) domain; that stretch reads VFAFTGQGAH…VNFEQAISHC (260 aa). The active-site For acyl/malonyl transferase activity is the Ser-980. Residues 1261–1392 form an N-terminal hotdog fold region; it reads HRLVKQEDTA…VRLRDEHAFD (132 aa). Positions 1261-1567 constitute a PKS/mFAS DH domain; it reads HRLVKQEDTA…FRKMPRTTLH (307 aa). Residues 1265 to 1566 are product template (PT) domain; it reads KQEDTAKEQH…RFRKMPRTTL (302 aa). His-1293 (proton acceptor; for dehydratase activity) is an active-site residue. A C-terminal hotdog fold region spans residues 1414-1567; it reads AGGRANRFQG…FRKMPRTTLH (154 aa). Residue Asp-1479 is the Proton donor; for dehydratase activity of the active site. The segment covering 1578–1605 has biased composition (polar residues); the sequence is NTKQVPHPTTNGSAIANGVNRNPSHNEP. Positions 1578 to 1622 are disordered; that stretch reads NTKQVPHPTTNGSAIANGVNRNPSHNEPSTPPVANGVNGTNGDQS. Positions 1622-1699 constitute a Carrier domain; it reads SDRKSLYSVL…DAQRELRRLE (78 aa). The residue at position 1659 (Ser-1659) is an O-(pantetheine 4'-phosphoryl)serine. Residues 1719–1913 form a thioesterase (TE) domain region; that stretch reads TRECNVVLMQ…DCTFVIWAKK (195 aa).

Its pathway is secondary metabolite biosynthesis; terpenoid biosynthesis. In terms of biological role, non-reducing polyketide synthase; part of the gene cluster that mediates the biosynthesis of the meroterpenoids nectripenoids A and B, as well as cochliquninone D and isocochliquninone E. The pathway probably begins with the HR-PKS ntnH that catalyzes two chain-extension steps to form a reduced triketide, which then primes the SAT domain in the NR-PKS ntnG to initiate three more cycles of extension to give a linear hexaketide corresponding to the polyketide part of nectripenoids. The FAD-dependent monooxygenase ntnJ then performs an oxidative decarboxylation at C11 of the ntnH/ntnG product, via an electrophilic aromatic hydroxylation with concomitant ipso-decarboxylation. The membrane-bound polyprenyl transferase ntnF then introduces a farnesyl group before the FAD-dependent monooxygenase ntnK functions as the first epoxidase on terminal C12'-C13' olefin, followed by a second epoxidation on C7'-C8' catalyzed by ntnA. The terpene cyclase/mutase ntnI then initiates the sequential tricyclic ring formation through protonation of the terminal epoxide and catalyzes the regioselective and stereoselective 6/6/6-tricyclic ring formation. The cytochrome P450 monooxygenase ntnM may then hydroxylate C1'. This chain is Non-reducing polyketide synthase ntnG, found in Nectria sp.